A 929-amino-acid polypeptide reads, in one-letter code: Isoleucine--tRNA ligase (929 aa).

The 'HIGH' region motif lies at 58–68 (PYANGDIHIGH). Residue glutamate 563 coordinates L-isoleucyl-5'-AMP. The 'KMSKS' region motif lies at 605–609 (KMSKS). Lysine 608 is an ATP binding site. Residues cysteine 892, cysteine 895, cysteine 912, and cysteine 915 each contribute to the Zn(2+) site.

It belongs to the class-I aminoacyl-tRNA synthetase family. IleS type 1 subfamily. In terms of assembly, monomer. The cofactor is Zn(2+).

The protein resides in the cytoplasm. It catalyses the reaction tRNA(Ile) + L-isoleucine + ATP = L-isoleucyl-tRNA(Ile) + AMP + diphosphate. In terms of biological role, catalyzes the attachment of isoleucine to tRNA(Ile). As IleRS can inadvertently accommodate and process structurally similar amino acids such as valine, to avoid such errors it has two additional distinct tRNA(Ile)-dependent editing activities. One activity is designated as 'pretransfer' editing and involves the hydrolysis of activated Val-AMP. The other activity is designated 'posttransfer' editing and involves deacylation of mischarged Val-tRNA(Ile). This Neisseria meningitidis serogroup B (strain ATCC BAA-335 / MC58) protein is Isoleucine--tRNA ligase.